The sequence spans 567 residues: Malate synthase, glyoxysomal (567 aa).

The active-site Proton acceptor is the arginine 182. The active-site Proton donor is the aspartate 468. The short motif at 565–567 (SRL) is the Microbody targeting signal element.

The protein belongs to the malate synthase family.

It is found in the glyoxysome. It carries out the reaction glyoxylate + acetyl-CoA + H2O = (S)-malate + CoA + H(+). The protein operates within carbohydrate metabolism; glyoxylate cycle; (S)-malate from isocitrate: step 2/2. This chain is Malate synthase, glyoxysomal, found in Ricinus communis (Castor bean).